The following is an 850-amino-acid chain: Elongation factor 2 (850 aa).

Residues 17 to 351 (KNIRNISVIA…QIALKLPSPL (335 aa)) form the tr-type G domain. GTP contacts are provided by residues 26–33 (AHVDHGKS), 159–162 (NKLD), and 213–215 (SGL). Position 707 is a diphthamide (His-707).

It belongs to the TRAFAC class translation factor GTPase superfamily. Classic translation factor GTPase family. EF-G/EF-2 subfamily.

It is found in the cytoplasm. The enzyme catalyses GTP + H2O = GDP + phosphate + H(+). It functions in the pathway protein biosynthesis; polypeptide chain elongation. Its function is as follows. Catalyzes the GTP-dependent ribosomal translocation step during translation elongation. During this step, the ribosome changes from the pre-translocational (PRE) to the post-translocational (POST) state as the newly formed A-site-bound peptidyl-tRNA and P-site-bound deacylated tRNA move to the P and E sites, respectively. Catalyzes the coordinated movement of the two tRNA molecules, the mRNA and conformational changes in the ribosome. The chain is Elongation factor 2 (EFT1) from Encephalitozoon cuniculi (strain GB-M1) (Microsporidian parasite).